The following is a 191-amino-acid chain: Imidazoleglycerol-phosphate dehydratase (191 aa).

Belongs to the imidazoleglycerol-phosphate dehydratase family.

It localises to the cytoplasm. It carries out the reaction D-erythro-1-(imidazol-4-yl)glycerol 3-phosphate = 3-(imidazol-4-yl)-2-oxopropyl phosphate + H2O. It participates in amino-acid biosynthesis; L-histidine biosynthesis; L-histidine from 5-phospho-alpha-D-ribose 1-diphosphate: step 6/9. The chain is Imidazoleglycerol-phosphate dehydratase from Methanosarcina mazei (strain ATCC BAA-159 / DSM 3647 / Goe1 / Go1 / JCM 11833 / OCM 88) (Methanosarcina frisia).